A 360-amino-acid chain; its full sequence is Phenylalanine--tRNA ligase alpha subunit (360 aa).

Position 260 (Glu260) interacts with Mg(2+).

The protein belongs to the class-II aminoacyl-tRNA synthetase family. Phe-tRNA synthetase alpha subunit type 1 subfamily. As to quaternary structure, tetramer of two alpha and two beta subunits. Requires Mg(2+) as cofactor.

The protein localises to the cytoplasm. The enzyme catalyses tRNA(Phe) + L-phenylalanine + ATP = L-phenylalanyl-tRNA(Phe) + AMP + diphosphate + H(+). This Rhizobium johnstonii (strain DSM 114642 / LMG 32736 / 3841) (Rhizobium leguminosarum bv. viciae) protein is Phenylalanine--tRNA ligase alpha subunit.